A 1035-amino-acid polypeptide reads, in one-letter code: Alpha-mannosidase B (1035 aa).

The N-terminal stretch at 1–20 (MGKVLILFLFVLLLITFINC) is a signal peptide. Residues Asn-19 and Asn-30 are each glycosylated (N-linked (GlcNAc...) asparagine). Residues His-47 and Asp-49 each coordinate Zn(2+). N-linked (GlcNAc...) asparagine glycosylation occurs at Asn-63. Asp-161 provides a ligand contact to Zn(2+). Asp-161 acts as the Nucleophile in catalysis. N-linked (GlcNAc...) asparagine glycosylation is found at Asn-245, Asn-250, Asn-270, Asn-309, Asn-327, and Asn-438. His-446 is a Zn(2+) binding site. N-linked (GlcNAc...) asparagine glycans are attached at residues Asn-487, Asn-497, Asn-503, Asn-710, Asn-719, Asn-735, Asn-792, Asn-852, Asn-863, Asn-880, Asn-962, and Asn-993.

It belongs to the glycosyl hydrolase 38 family. Requires Zn(2+) as cofactor.

Its subcellular location is the secreted. The enzyme catalyses Hydrolysis of terminal, non-reducing alpha-D-mannose residues in alpha-D-mannosides.. This is Alpha-mannosidase B (manB) from Dictyostelium discoideum (Social amoeba).